Reading from the N-terminus, the 466-residue chain is Argininosuccinate lyase (466 aa).

This sequence belongs to the lyase 1 family. Argininosuccinate lyase subfamily.

The protein resides in the cytoplasm. The enzyme catalyses 2-(N(omega)-L-arginino)succinate = fumarate + L-arginine. It participates in amino-acid biosynthesis; L-arginine biosynthesis; L-arginine from L-ornithine and carbamoyl phosphate: step 3/3. This chain is Argininosuccinate lyase, found in Bartonella bacilliformis (strain ATCC 35685 / KC583 / Herrer 020/F12,63).